We begin with the raw amino-acid sequence, 423 residues long: 5-hydroxytryptamine receptor 1A (423 aa).

Residues 1–20 (MEGLSPGQGNNTTSSEGPFG) form a disordered region. Residues 1–38 (MEGLSPGQGNNTTSSEGPFGTRGNATGISDVTFSYQVI) lie on the Extracellular side of the membrane. Residues 7–16 (GQGNNTTSSE) are compositionally biased toward polar residues. 3 N-linked (GlcNAc...) asparagine glycosylation sites follow: Asn10, Asn11, and Asn24. Residues 39-59 (TSLLLGTLIFCAVLGNACVVA) traverse the membrane as a helical segment. Residues 60–73 (AIALERSLQNVANY) lie on the Cytoplasmic side of the membrane. The chain crosses the membrane as a helical span at residues 74–98 (LIGSLAVTDLMVSVLVLPMAALYQV). Over 99–107 (LNKWTLGQV) the chain is Extracellular. A helical membrane pass occupies residues 108 to 132 (TCDLFIALDVLCCTSSILHLCAIAL). An intrachain disulfide couples Cys109 to Cys187. 2 residues coordinate serotonin: Asp116 and Cys120. Residues 133–135 (DRY) carry the DRY motif; important for ligand-induced conformation changes motif. At 133-152 (DRYWAITDPIDYVNKRTPRR) the chain is on the cytoplasmic side. A helical membrane pass occupies residues 153–174 (AAALISLTWLIGFLISIPPMLG). Over 175–193 (WRTPEDRSDPDACTISKDH) the chain is Extracellular. The chain crosses the membrane as a helical span at residues 194-216 (GYTIYSTFGAFYIPLLLMLVLYG). Over 217–346 (RIFRAARFRI…LARERKTVKT (130 aa)) the chain is Cytoplasmic. The segment at 235-277 (RKGADARSGVSPAPQPRKSVNGEPGGREWRQGPGSKAGGPLCT) is disordered. 1D-myo-inositol 4-phosphate is bound by residues Lys345, Thr346, and Gly352. A helical transmembrane segment spans residues 347 to 370 (LGIIMGTFILCWLPFFIVALVLPF). Over 371-378 (CESSCHMP) the chain is Extracellular. The helical transmembrane segment at 379 to 403 (TLLGAIINWLGYSNSLLNPVIYAYF) threads the bilayer. Residues 396–400 (NPVIY) carry the NPxxY motif; important for ligand-induced conformation changes and signaling motif. 1D-myo-inositol 4-phosphate contacts are provided by Phe403, Asn404, and Lys405. Topologically, residues 404–423 (NKDFQNAFKKIVRCKFCRRR) are cytoplasmic.

The protein belongs to the G-protein coupled receptor 1 family. 5-hydroxytryptamine receptor subfamily. HTR1A sub-subfamily. Heterodimer; heterodimerizes with GPER1. Interacts with YIF1B. Interacts with GPR39 and GALR1.

It localises to the cell membrane. The protein resides in the cell projection. It is found in the dendrite. Its activity is regulated as follows. G-protein coupled receptor activity is regulated by lipids: phosphatidylinositol 4-phosphate increases HTR1A-mediated activity. Its function is as follows. G-protein coupled receptor for 5-hydroxytryptamine (serotonin). Also functions as a receptor for various drugs and psychoactive substances. Ligand binding causes a conformation change that triggers signaling via guanine nucleotide-binding proteins (G proteins) and modulates the activity of downstream effectors, such as adenylate cyclase. HTR1A is coupled to G(i)/G(o) G alpha proteins and mediates inhibitory neurotransmission: signaling inhibits adenylate cyclase activity and activates a phosphatidylinositol-calcium second messenger system that regulates the release of Ca(2+) ions from intracellular stores. Beta-arrestin family members regulate signaling by mediating both receptor desensitization and resensitization processes. The polypeptide is 5-hydroxytryptamine receptor 1A (HTR1A) (Vulpes vulpes (Red fox)).